The sequence spans 566 residues: Osteoclast stimulatory transmembrane protein (566 aa).

Over Met-1 to Gln-51 the chain is Cytoplasmic. A helical membrane pass occupies residues Leu-52–Ser-72. Residues Leu-73–Ser-81 lie on the Extracellular side of the membrane. The helical transmembrane segment at Ala-82–Val-102 threads the bilayer. At Arg-103–Ala-128 the chain is on the cytoplasmic side. Residues Thr-129 to Leu-149 form a helical membrane-spanning segment. Over Arg-150 to Arg-227 the chain is Extracellular. Residues Val-228–Tyr-248 traverse the membrane as a helical segment. At Leu-249–Gly-304 the chain is on the cytoplasmic side. A helical transmembrane segment spans residues Leu-305–Leu-325. The Extracellular segment spans residues Leu-326–Arg-398. A helical transmembrane segment spans residues Ala-399 to Glu-419. Residues Ala-420–Gly-566 are Cytoplasmic-facing.

It is found in the membrane. Its function is as follows. Probable cell surface receptor that plays a role in cellular fusion and cell differentiation. Cooperates with DCSTAMP in modulating cell-cell fusion in both osteoclasts and foreign body giant cells (FBGCs). Involved in osteoclast bone resorption. Promotes osteoclast differentiation and may play a role in the multinucleated osteoclast maturation. This is Osteoclast stimulatory transmembrane protein (OCSTAMP) from Homo sapiens (Human).